The chain runs to 111 residues: Large ribosomal subunit protein uL22 (111 aa).

The protein belongs to the universal ribosomal protein uL22 family. In terms of assembly, part of the 50S ribosomal subunit.

In terms of biological role, this protein binds specifically to 23S rRNA; its binding is stimulated by other ribosomal proteins, e.g. L4, L17, and L20. It is important during the early stages of 50S assembly. It makes multiple contacts with different domains of the 23S rRNA in the assembled 50S subunit and ribosome. The globular domain of the protein is located near the polypeptide exit tunnel on the outside of the subunit, while an extended beta-hairpin is found that lines the wall of the exit tunnel in the center of the 70S ribosome. The protein is Large ribosomal subunit protein uL22 of Citrifermentans bemidjiense (strain ATCC BAA-1014 / DSM 16622 / JCM 12645 / Bem) (Geobacter bemidjiensis).